The chain runs to 221 residues: PKHD-type hydroxylase A9601_13531 (221 aa).

Residues 80–174 (LIHGIMFTKS…RIVCVGWIES (95 aa)) form the Fe2OG dioxygenase domain. 3 residues coordinate Fe cation: His98, Asp100, and His155. Residue Arg165 coordinates 2-oxoglutarate.

Requires Fe(2+) as cofactor. It depends on L-ascorbate as a cofactor.

This is PKHD-type hydroxylase A9601_13531 from Prochlorococcus marinus (strain AS9601).